We begin with the raw amino-acid sequence, 363 residues long: Type-2 angiotensin II receptor (363 aa).

Over 1-45 (MKGNSTLATTSKNITSGLHFGLVNISGNNESTLNCSQKPSDKHLD) the chain is Extracellular. N-linked (GlcNAc...) asparagine glycosylation is found at N4, N13, N24, N29, and N34. 2 cysteine pairs are disulfide-bonded: C35/C290 and C117/C195. The helical transmembrane segment at 46–70 (AIPILYYIIFVIGFLVNIVVVTLFC) threads the bilayer. The Cytoplasmic portion of the chain corresponds to 71-80 (CQKGPKKVSS). The chain crosses the membrane as a helical span at residues 81 to 104 (IYIFNLAVADLLLLATLPLWATYY). Residues Y103 and Y104 each coordinate angiotensin II. The Extracellular portion of the chain corresponds to 105 to 114 (SYRYDWLFGP). A helical membrane pass occupies residues 115-140 (VMCKVFGSFLTLNMFASIFFITCMSV). Residues 141 to 159 (DRYQSVIYPFLSQRRNPWQ) are Cytoplasmic-facing. Residues 160–181 (ASYIVPLVWCMACLSSLPTFYF) form a helical membrane-spanning segment. Angiotensin II is bound by residues R182, Y204, and K215. The Extracellular portion of the chain corresponds to 182–206 (RDVRTIEYLGVNACIMAFPPEKYAQ). Residues 207 to 232 (WSAGIALMKNILGFIIPLIFIATCYF) form a helical membrane-spanning segment. At 233–257 (GIRKHLLKTNSYGKNRITRDQVLKM) the chain is on the cytoplasmic side. The helical transmembrane segment at 258–281 (AAAVVLAFIICWLPFHVLTFLDAL) threads the bilayer. Residue D279 coordinates angiotensin II. Residues 282–294 (AWMGVINSCEVIA) are Extracellular-facing. A helical transmembrane segment spans residues 295–320 (VIDLALPFAILLGFTNSCVNPFLYCF). D297 is an angiotensin II binding site. The Cytoplasmic segment spans residues 321 to 363 (VGNRFQQKLRSVFRVPITWLQGKRESMSCRKSSSLREMETFVS). The interval 324-333 (RFQQKLRSVF) is helix VIII.

This sequence belongs to the G-protein coupled receptor 1 family. Interacts with MTUS1. In terms of tissue distribution, in adult, highly expressed in myometrium with lower levels in adrenal gland and fallopian tube. Expressed in the cerebellum. Very highly expressed in fetal kidney and intestine.

The protein localises to the cell membrane. Functionally, receptor for angiotensin II, a vasoconstricting peptide. Signals primarily via a non-canonical G-protein- and beta-arrestin independent pathways. Cooperates with MTUS1 to inhibit ERK2 activation and cell proliferation. The polypeptide is Type-2 angiotensin II receptor (Homo sapiens (Human)).